We begin with the raw amino-acid sequence, 311 residues long: Geranylgeranyl transferase type-2 subunit alpha (311 aa).

A coiled-coil region spans residues Glu-12–Asn-43. 5 PFTA repeats span residues Ile-49–Lys-82, Asn-93–Asp-126, Arg-129–Leu-162, Asp-164–Pro-197, and Glu-206–Pro-239.

The protein belongs to the protein prenyltransferase subunit alpha family. Heterodimer of an alpha and a beta subunit.

It catalyses the reaction geranylgeranyl diphosphate + L-cysteinyl-[protein] = S-geranylgeranyl-L-cysteinyl-[protein] + diphosphate. In terms of biological role, catalyzes the transfer of a geranylgeranyl moiety from geranylgeranyl diphosphate to proteins with a C-terminal sequence motif -XCC or -XCXC, where both cysteines may become modified. The polypeptide is Geranylgeranyl transferase type-2 subunit alpha (rabggta) (Dictyostelium discoideum (Social amoeba)).